A 161-amino-acid chain; its full sequence is Regulator of ribonuclease activity A (161 aa).

Belongs to the RraA family. As to quaternary structure, homotrimer. Binds to both RNA-binding sites in the C-terminal region of Rne and to RhlB.

The protein resides in the cytoplasm. Its function is as follows. Globally modulates RNA abundance by binding to RNase E (Rne) and regulating its endonucleolytic activity. Can modulate Rne action in a substrate-dependent manner by altering the composition of the degradosome. Modulates RNA-binding and helicase activities of the degradosome. The sequence is that of Regulator of ribonuclease activity A from Shigella flexneri serotype 5b (strain 8401).